The primary structure comprises 301 residues: Phosphoglycolate phosphatase 2 (301 aa).

The Nucleophile role is filled by Asp-19.

It belongs to the HAD-like hydrolase superfamily. CbbY/CbbZ/Gph/YieH family.

The enzyme catalyses 2-phosphoglycolate + H2O = glycolate + phosphate. In terms of biological role, dephosphorylates 2-phosphoglycolate, but does not contribute to photorespiratory metabolism. The chain is Phosphoglycolate phosphatase 2 (PGLP2) from Arabidopsis thaliana (Mouse-ear cress).